A 261-amino-acid chain; its full sequence is Glutathione S-transferase theta-1 (261 aa).

The region spanning 2–101 (GLELYLDLLS…YLSRKYNTPD (100 aa)) is the GST N-terminal domain. Glutathione-binding positions include 72–73 (KV) and 85–86 (EC). In terms of domain architecture, GST C-terminal spans 107–248 (DIKKRAQVDE…LSNIQIDPQL (142 aa)).

Belongs to the GST superfamily. Theta family. In terms of assembly, homodimer.

The protein resides in the cytoplasm. The catalysed reaction is RX + glutathione = an S-substituted glutathione + a halide anion + H(+). Functionally, conjugation of reduced glutathione to a wide number of exogenous and endogenous hydrophobic electrophiles. In Gallus gallus (Chicken), this protein is Glutathione S-transferase theta-1 (GSTT1).